We begin with the raw amino-acid sequence, 288 residues long: NADPH-dependent aldehyde reductase 1, chloroplastic (288 aa).

The segment covering 1–18 has biased composition (basic and acidic residues); the sequence is MASEKQKQHAQPGKEHVM. The interval 1–32 is disordered; sequence MASEKQKQHAQPGKEHVMESSPQFSSSDYQPS. The segment covering 20–32 has biased composition (polar residues); that stretch reads SSPQFSSSDYQPS. Residue 47–71 coordinates NADP(+); that stretch reads SGIGRAVGYCFASEGATVAFTYVKG. Substrate is bound at residue serine 179. Catalysis depends on tyrosine 192, which acts as the Proton acceptor.

The protein belongs to the short-chain dehydrogenases/reductases (SDR) family.

The protein localises to the plastid. Its subcellular location is the chloroplast. Aldehyde reductase that catalyzes the reduction of the aldehyde carbonyl groups on saturated and alpha,beta-unsaturated aldehydes with more than 5 carbons. No activity on alpha,beta-unsaturated ketones. Can use propionaldehyde, butyraldehyde, methylglyoxal, (e)-2-pentenal, (E)-2-hexenal, (Z)-3-hexenal and (E)-2-nonenal as substrates, but not propenal (acrolein), crotonaldehyde, 2-butanone, 3-buten-2-one or 1-penten-3-one. May act as a short alcohol-polyol-sugar dehydrogenase possibly related to carbohydrate metabolism and the acquisition of desiccation tolerance. May also be involved in signal transduction. This chain is NADPH-dependent aldehyde reductase 1, chloroplastic, found in Arabidopsis thaliana (Mouse-ear cress).